The chain runs to 98 residues: Keratinocyte differentiation-associated protein (98 aa).

A signal peptide spans 1-22; that stretch reads MKIPILPIVALLSLLALHAAQG.

Ubiquitously expressed in stratified epithelium.

The protein localises to the secreted. Its function is as follows. May act as a soluble regulator of keratinocyte differentiation. May play an important role in embryonic skin morphogenesis. This chain is Keratinocyte differentiation-associated protein, found in Rattus norvegicus (Rat).